Reading from the N-terminus, the 686-residue chain is Epsin (686 aa).

Residues 14 to 145 form the ENTH domain; it reads DAVLNTPEIE…QDDQRIKEER (132 aa). Disordered stretches follow at residues 177–417 and 463–571; these read YDSD…FNNN and NSSM…TMRP. The segment covering 185–211 has biased composition (polar residues); the sequence is NQRDSYGGNQRDSYGGNQRDSYGGNQR. A compositionally biased stretch (basic and acidic residues) spans 212–225; sequence ETTRRDSFNGRDEG. Residues 237 to 256 are compositionally biased toward polar residues; the sequence is SYDSDPYSNTRAEYENYSNR. Composition is skewed to low complexity over residues 269–340 and 383–417; these read SNNS…SGPS and NNTN…FNNN. Positions 491 to 503 are enriched in polar residues; the sequence is FDQQSGDFSNKND. Over residues 504–521 the composition is skewed to basic and acidic residues; the sequence is GQQKPKDTNDPWSKKDLF. The segment covering 527–547 has biased composition (low complexity); it reads GNQNPNQSPVNNTNNNNNGNT. Residues 558 to 567 show a composition bias toward polar residues; the sequence is PITSAGSTIP.

It belongs to the epsin family.

It is found in the membrane. The protein resides in the clathrin-coated pit. Binds to membranes enriched in phosphatidylinositol 4,5-bisphosphate (PtdIns(4,5)P2). The chain is Epsin (epnA) from Dictyostelium discoideum (Social amoeba).